Reading from the N-terminus, the 664-residue chain is ATP-dependent zinc metalloprotease FtsH (664 aa).

The Cytoplasmic portion of the chain corresponds to 1-9 (MKQNIKRNW). Residues 10-30 (IWILIVMIVIGIILYFSIRNL) traverse the membrane as a helical segment. At 31-136 (FSTKVAEWSI…KSVATPQPNP (106 aa)) the chain is on the extracellular side. Residues 137–157 (FLGILISSVPVLILIFVMVWI) traverse the membrane as a helical segment. The Cytoplasmic portion of the chain corresponds to 158–664 (YRSQVKMMNG…SLIEKTSKKE (507 aa)). Residue 229 to 236 (GPPGTGKT) participates in ATP binding. Zn(2+) is bound at residue His-451. Glu-452 is a catalytic residue. Zn(2+) contacts are provided by His-455 and Asp-529. Over residues 639–649 (IEEKDLSKNSE) the composition is skewed to basic and acidic residues. Positions 639–664 (IEEKDLSKNSEDNNLDSLIEKTSKKE) are disordered.

In the central section; belongs to the AAA ATPase family. It in the C-terminal section; belongs to the peptidase M41 family. Homohexamer. Zn(2+) serves as cofactor.

Its subcellular location is the cell membrane. Acts as a processive, ATP-dependent zinc metallopeptidase for both cytoplasmic and membrane proteins. Plays a role in the quality control of integral membrane proteins. The chain is ATP-dependent zinc metalloprotease FtsH from Mycoplasmopsis synoviae (strain 53) (Mycoplasma synoviae).